Reading from the N-terminus, the 184-residue chain is Inorganic pyrophosphatase (184 aa).

Substrate is bound by residues Lys-19, Arg-33, and Tyr-45. The Mg(2+) site is built by Asp-55, Asp-60, and Asp-92. Tyr-129 provides a ligand contact to substrate.

The protein belongs to the PPase family. In terms of assembly, homohexamer. Requires Mg(2+) as cofactor.

It localises to the cytoplasm. It catalyses the reaction diphosphate + H2O = 2 phosphate + H(+). Functionally, catalyzes the hydrolysis of inorganic pyrophosphate (PPi) forming two phosphate ions. The sequence is that of Inorganic pyrophosphatase from Mycoplasma genitalium (strain ATCC 33530 / DSM 19775 / NCTC 10195 / G37) (Mycoplasmoides genitalium).